The chain runs to 263 residues: Endonuclease 8 (263 aa).

P2 (schiff-base intermediate with DNA) is an active-site residue. E3 acts as the Proton donor in catalysis. K53 serves as the catalytic Proton donor; for beta-elimination activity. DNA contacts are provided by Q70, R125, and N169. Residues 229–263 (KVFHRDGEPCERCGGIIEKTTLSSRPFYWCPGCQH) form an FPG-type zinc finger. R253 acts as the Proton donor; for delta-elimination activity in catalysis.

It belongs to the FPG family. The cofactor is Zn(2+).

It carries out the reaction 2'-deoxyribonucleotide-(2'-deoxyribose 5'-phosphate)-2'-deoxyribonucleotide-DNA = a 3'-end 2'-deoxyribonucleotide-(2,3-dehydro-2,3-deoxyribose 5'-phosphate)-DNA + a 5'-end 5'-phospho-2'-deoxyribonucleoside-DNA + H(+). Involved in base excision repair of DNA damaged by oxidation or by mutagenic agents. Acts as a DNA glycosylase that recognizes and removes damaged bases. Has a preference for oxidized pyrimidines, such as thymine glycol, 5,6-dihydrouracil and 5,6-dihydrothymine. Has AP (apurinic/apyrimidinic) lyase activity and introduces nicks in the DNA strand. Cleaves the DNA backbone by beta-delta elimination to generate a single-strand break at the site of the removed base with both 3'- and 5'-phosphates. In Escherichia coli O127:H6 (strain E2348/69 / EPEC), this protein is Endonuclease 8.